The chain runs to 121 residues: Large ribosomal subunit protein uL18 (121 aa).

Belongs to the universal ribosomal protein uL18 family. Part of the 50S ribosomal subunit; part of the 5S rRNA/L5/L18/L25 subcomplex. Contacts the 5S and 23S rRNAs.

Its function is as follows. This is one of the proteins that bind and probably mediate the attachment of the 5S RNA into the large ribosomal subunit, where it forms part of the central protuberance. This chain is Large ribosomal subunit protein uL18, found in Thermoanaerobacter pseudethanolicus (strain ATCC 33223 / 39E) (Clostridium thermohydrosulfuricum).